The following is a 344-amino-acid chain: MATPVNAQCSSKTWELSLYELHRTPQEAIMDGTEIAVSPRSLHSELMCPICLDMLKNTMTTKECLHRFCSDCIVTALRSGNKECPTCRKKLVSKRSLRPDPNFDALISKIYPSRDEYEAHQDRVLAKLNRLHNQQALSSSIEEGLKMQAMHRAQRVRKHQHESDNTTFSGGEDNCDSRSHVSNPSVHSNQEAGPSRKRSRASEDSGAEPDLSHEGGVRSPDPPGGGETGSEIELVFRAHPLLVEKDGYSQTRYVKTTANATVDHLSKYLALRIALEEEVLRGEAEGVTLGEVSEKQYTIYICTGVAGGQYTTLNGSLTLELVNEKYWKVSKPLELYYAPTKEQK.

The segment at 2–181 (ATPVNAQCSS…EDNCDSRSHV (180 aa)) is interaction with HIP2. The RING-type zinc-finger motif lies at 48-88 (CPICLDMLKNTMTTKECLHRFCSDCIVTALRSGNKECPTCR). The interval 90–95 (KLVSKR) is interaction with nucleosomes via an acidic patch on histone H2A and histone H2B. The tract at residues 148–230 (QAMHRAQRVR…DPPGGGETGS (83 aa)) is disordered. A compositionally biased stretch (polar residues) spans 180-192 (HVSNPSVHSNQEA).

In terms of assembly, component of chromatin-associated Polycomb (PcG) complexes. Component of a PRC1-like complex. Component of some MLL1/MLL complex.

The protein localises to the nucleus. It is found in the cytoplasm. It localises to the chromosome. The enzyme catalyses S-ubiquitinyl-[E2 ubiquitin-conjugating enzyme]-L-cysteine + [acceptor protein]-L-lysine = [E2 ubiquitin-conjugating enzyme]-L-cysteine + N(6)-ubiquitinyl-[acceptor protein]-L-lysine.. It functions in the pathway protein modification; protein ubiquitination. E3 ubiquitin-protein ligase that mediates monoubiquitination of 'Lys-119' of histone H2A (H2AK119Ub), thereby playing a central role in histone code and gene regulation. H2AK119Ub gives a specific tag for epigenetic transcriptional repression. Essential component of a Polycomb group (PcG) multiprotein PRC1-like complex, a complex class required to maintain the transcriptionally repressive state of many genes, including Hox genes, throughout development. PcG PRC1 complex acts via chromatin remodeling and modification of histones, rendering chromatin heritably changed in its expressibility. This is E3 ubiquitin-protein ligase RING2-A (rnf2-a) from Xenopus laevis (African clawed frog).